A 177-amino-acid polypeptide reads, in one-letter code: Chorismate pyruvate-lyase (177 aa).

4 residues coordinate substrate: Met37, Arg79, Leu117, and Glu159.

Belongs to the UbiC family. As to quaternary structure, monomer.

It is found in the cytoplasm. The enzyme catalyses chorismate = 4-hydroxybenzoate + pyruvate. The protein operates within cofactor biosynthesis; ubiquinone biosynthesis. Functionally, removes the pyruvyl group from chorismate, with concomitant aromatization of the ring, to provide 4-hydroxybenzoate (4HB) for the ubiquinone pathway. The protein is Chorismate pyruvate-lyase of Sodalis glossinidius (strain morsitans).